A 208-amino-acid chain; its full sequence is Small ribosomal subunit protein uS4 (208 aa).

In terms of domain architecture, S4 RNA-binding spans 98–161; the sequence is RRLDNVVYRL…RKIPVLAEAQ (64 aa).

It belongs to the universal ribosomal protein uS4 family. In terms of assembly, part of the 30S ribosomal subunit. Contacts protein S5. The interaction surface between S4 and S5 is involved in control of translational fidelity.

One of the primary rRNA binding proteins, it binds directly to 16S rRNA where it nucleates assembly of the body of the 30S subunit. In terms of biological role, with S5 and S12 plays an important role in translational accuracy. The sequence is that of Small ribosomal subunit protein uS4 from Desulfovibrio desulfuricans (strain ATCC 27774 / DSM 6949 / MB).